The chain runs to 266 residues: uncharacterized protein (266 aa).

Belongs to the chlamydial CPn_0087/CT3_09/TC_0583 family.

This is an uncharacterized protein from Chlamydia muridarum (strain MoPn / Nigg).